A 360-amino-acid polypeptide reads, in one-letter code: Peptide chain release factor 1 (360 aa).

Gln-236 is subject to N5-methylglutamine. Positions 288–308 (QDEQDAERKSTIGTGDRSERI) are disordered. Residues 293–308 (AERKSTIGTGDRSERI) are compositionally biased toward basic and acidic residues.

This sequence belongs to the prokaryotic/mitochondrial release factor family. Post-translationally, methylated by PrmC. Methylation increases the termination efficiency of RF1.

It is found in the cytoplasm. Peptide chain release factor 1 directs the termination of translation in response to the peptide chain termination codons UAG and UAA. The chain is Peptide chain release factor 1 from Streptococcus equi subsp. equi (strain 4047).